We begin with the raw amino-acid sequence, 1221 residues long: Adhesion G-protein coupled receptor G6 (1221 aa).

The first 37 residues, 1–37 (MMFRSDRMWSCHWKWKPSPLLFLFALYIMCVPHSVWG), serve as a signal peptide directing secretion. At 38–862 (CANCRVVLSN…ASQLDARNTK (825 aa)) the chain is on the extracellular side. Cys-41 and Cys-67 are oxidised to a cystine. Residues 41–149 (CRVVLSNPSG…KGFNASYIRV (109 aa)) enclose the CUB domain. Residues Glu-89 and Asp-97 each contribute to the Ca(2+) site. Cysteines 94 and 111 form a disulfide. The N-linked (GlcNAc...) asparagine glycan is linked to Asn-121. Ca(2+) contacts are provided by Asp-134, Ser-136, and Ile-137. N-linked (GlcNAc...) asparagine glycans are attached at residues Asn-143, Asn-206, Asn-258, Asn-314, Asn-324, Asn-353, Asn-438, Asn-445, Asn-452, Asn-485, Asn-488, and Asn-505. The region spanning 154–356 (RNQKVILPQT…ALKAESNLSC (203 aa)) is the Pentraxin (PTX) domain. Disulfide bonds link Cys-186-Cys-254 and Cys-231-Cys-277. Positions 473 to 837 (EPRLVLWALL…SDASETVCLC (365 aa)) are mediates interaction with laminin-2. Disulfide bonds link Cys-525/Cys-560 and Cys-548/Cys-580. Residues Asn-563, Asn-593, Asn-600, Asn-605, Asn-667, Asn-673, Asn-695, Asn-704, Asn-750, Asn-776, Asn-811, and Asn-818 are each glycosylated (N-linked (GlcNAc...) asparagine). A GAIN-B domain is found at 670–853 (SHVNITTRNL…GVLMDLPRSA (184 aa)). 2 disulfide bridges follow: Cys-803-Cys-835 and Cys-822-Cys-837. The segment at 803–853 (CAFWDLNKNKSFGGWNTSGCVAHRDSDASETVCLCNHFTHFGVLMDLPRSA) is GPS. The interval 842–850 (HFGVLMDLP) is stachel. The chain crosses the membrane as a helical span at residues 863 to 883 (VLTFISYIGCGISAIFSAATL). Residues 884-903 (LTYVAFEKLRRDYPSKILMN) are Cytoplasmic-facing. Residues 904–924 (LSTALLFLNLLFLLDGWITSF) form a helical membrane-spanning segment. Residues 925-929 (NVDGL) lie on the Extracellular side of the membrane. A helical transmembrane segment spans residues 930–950 (CIAVAVLLHFFLLATFTWMGL). Residues 951 to 970 (EAIHMYIALVKVFNTYIRRY) lie on the Cytoplasmic side of the membrane. The chain crosses the membrane as a helical span at residues 971 to 991 (ILKFCIIGWGLPALVVSVVLA). At 992 to 1024 (SRNNNEVYGKESYGKEKGDEFCWIQDPVIFYVT) the chain is on the extracellular side. A helical transmembrane segment spans residues 1025 to 1045 (CAGYFGVMFFLNIAMFIVVMV). Residues 1046–1069 (QICGRNGKRSNRTLREEVLRNLRS) are Cytoplasmic-facing. A helical membrane pass occupies residues 1070–1090 (VVSLTFLLGMTWGFAFFAWGP). Residues 1091 to 1092 (LN) are Extracellular-facing. A helical transmembrane segment spans residues 1093-1113 (IPFMYLFSIFNSLQGLFIFIF). Residue Asn-1103 participates in 17alpha-hydroxyprogesterone binding. Over 1114–1221 (HCAMKENVQK…GQVLVKTGPC (108 aa)) the chain is Cytoplasmic. Positions 1156–1176 (NLGKSLSSSSIGSNSTYLTSK) are disordered. A phosphoserine mark is found at Ser-1165 and Ser-1168.

The protein belongs to the G-protein coupled receptor 2 family. Adhesion G-protein coupled receptor (ADGR) subfamily. In terms of assembly, heterodimer of 2 chains generated by proteolytic processing; the large extracellular N-terminal fragment and the membrane-bound C-terminal fragment predominantly remain associated and non-covalently linked. Interacts with Laminin-2; this interaction stabilizes the receptor in an inactive state. Laminin-2 polymerization could facilitate ADGRG6-NTF removal, thereby exposing the tethered agonist to drive myelination. Interacts with PRNP. Interacts with ITGB1. Interacts with LRP1. In terms of processing, proteolytically cleaved into 2 conserved sites: one in the GPS region of the GAIN-B domain (S1 site) and the other in the middle of the extracellular domain (S2 site). The proteolytic cleavage at S1 site generates an extracellular subunit and a seven-transmembrane subunit. Furin is involved in the cleavage of the S2 site generating a soluble fragment. Processing at the GPS region occurred independent of and probably prior to the cleavage at the S2 site. Proteolytic cleavage is required for activation of the receptor. Post-translationally, highly glycosylated. Expressed in placenta and to a lower extent in pancreas and liver. Detected in aortic endothelial cells but not in skin microvascular endothelial cells.

Its subcellular location is the cell membrane. With respect to regulation, forms a heterodimer of 2 chains generated by proteolytic processing that remain associated through non-covalent interactions mediated by the GAIN-B domain. In the inactivated receptor, the Stachel sequence (also named stalk) is embedded in the GAIN-B domain, where it adopts a beta-strand conformation. On activation, the Stachel moves into the 7 transmembrane region and adopts a twisted hook-shaped configuration that forms contacts within the receptor, leading to coupling of a G-alpha protein, which activates signaling. The cleaved GAIN-B and N-terminal domains can then dissociate from the rest of the receptor. In terms of biological role, adhesion G-protein coupled receptor (aGPCR) for steroid hormones, such as progesterone and 17alpha-hydroxyprogesterone (17OHP). Involved in many biological processes, such as myelination, sprouting angiogenesis, placenta, ear and cartilage development. Ligand binding causes a conformation change that triggers signaling via guanine nucleotide-binding proteins (G proteins) and modulates the activity of downstream effectors, such as adenylate cyclase. ADGRG6 is coupled to G(i) G alpha proteins and mediates inhibition of adenylate cyclase. Also able to couple to G(q) G proteins. Involved in myelination of the peripheral nervous system: required for differentiation of promyelinating Schwann cells and for normal myelination of axons. Also acts as a regulator of body length and bone mass. Acts as a regulator of blood-brain barrier formation in the central nervous system vie its association with LRP1 and ITGB1. The sequence is that of Adhesion G-protein coupled receptor G6 from Homo sapiens (Human).